A 340-amino-acid chain; its full sequence is CRISPR-associated protein Cas7 (340 aa).

As to quaternary structure, component of the Cascade-like complex (Cascade I-B), composed of Cas5, Cas6, Cas7 and crRNA.

The protein localises to the cytoplasm. Its function is as follows. CRISPR (clustered regularly interspaced short palindromic repeat) is an adaptive immune system that provides protection against mobile genetic elements (viruses, transposable elements and conjugative plasmids). CRISPR clusters contain sequences complementary to antecedent mobile elements and target invading nucleic acids. CRISPR clusters are transcribed and processed into CRISPR RNA (crRNA). Plasmid targeted by CRISPR locus P1 transform wild-type cells very poorly. This protein helps process or stabilize pre-crRNA into individual crRNA units, in vivo Cas6 and Cas7 are also required for optimal crRNA processing and/or stability. The protein is CRISPR-associated protein Cas7 of Haloferax volcanii (strain ATCC 29605 / DSM 3757 / JCM 8879 / NBRC 14742 / NCIMB 2012 / VKM B-1768 / DS2) (Halobacterium volcanii).